Here is a 404-residue protein sequence, read N- to C-terminus: Ubiquitin-like modifier-activating enzyme 5 (404 aa).

ATP-binding residues include glycine 83, aspartate 104, lysine 127, asparagine 150, and asparagine 184. Cysteine 226 and cysteine 229 together coordinate Zn(2+). The active-site Glycyl thioester intermediate is cysteine 250. Cysteine 303 and cysteine 308 together coordinate Zn(2+). The disordered stretch occupies residues alanine 372–serine 393. A compositionally biased stretch (low complexity) spans glutamate 382 to glutamate 391.

It belongs to the ubiquitin-activating E1 family. UBA5 subfamily.

E1-like enzyme which activates UFM1. This chain is Ubiquitin-like modifier-activating enzyme 5, found in Drosophila simulans (Fruit fly).